We begin with the raw amino-acid sequence, 106 residues long: Thioredoxin (106 aa).

K3 bears the N6-acetyllysine mark. The 104-residue stretch at 3–106 folds into the Thioredoxin domain; sequence KQIESKTAFQ…KLEATINELV (104 aa). N6-succinyllysine is present on K8. Residues C32 and C35 each act as nucleophile in the active site. A disulfide bridge links C32 with C35. N6-acetyllysine is present on K39. S-nitrosocysteine is present on residues C62 and C69. C73 bears the S-nitrosocysteine; alternate mark. K95 is subject to N6-acetyllysine; alternate. K95 carries the N6-succinyllysine; alternate modification.

The protein belongs to the thioredoxin family. In terms of assembly, homodimer; disulfide-linked. Interacts with TXNIP through the redox-active site. Interacts with MAP3K5 and CASP3. Interacts with APEX1; the interaction stimulates the FOS/JUN AP-1 DNA-binding activity in a redox-dependent manner. In the fully reduced protein, both Cys-69 and Cys-73 are nitrosylated in response to nitric oxide (NO). When two disulfide bonds are present in the protein, only Cys-73 is nitrosylated. Cys-73 can serve as donor for nitrosylation of target proteins.

The protein resides in the nucleus. The protein localises to the cytoplasm. Its subcellular location is the secreted. Participates in various redox reactions through the reversible oxidation of its active center dithiol to a disulfide and catalyzes dithiol-disulfide exchange reactions. Plays a role in the reversible S-nitrosylation of cysteine residues in target proteins, and thereby contributes to the response to intracellular nitric oxide. Nitrosylates the active site Cys of CASP3 in response to nitric oxide (NO), and thereby inhibits caspase-3 activity. Induces the FOS/JUN AP-1 DNA binding activity in ionizing radiation (IR) cells through its oxidation/reduction status and stimulates AP-1 transcriptional activity. This chain is Thioredoxin (TXN), found in Pongo abelii (Sumatran orangutan).